The sequence spans 760 residues: Catalase-peroxidase (760 aa).

Positions 1–57 (MTDSQDNRTPESPQGVDRKAEGGCPVLHDGVTAQGSESENPAIDSPTPRTGGRPNSL) are disordered. The segment at residues 129–251 (WHAAGTYRIH…LGAVQMGLIY (123 aa)) is a cross-link (tryptophyl-tyrosyl-methioninium (Trp-Tyr) (with M-277)). The active-site Proton acceptor is His-130. The segment at residues 251–277 (YVNPEGPNGNPDPLASARDIRETFARM) is a cross-link (tryptophyl-tyrosyl-methioninium (Tyr-Met) (with W-129)). A heme b-binding site is contributed by His-292.

Belongs to the peroxidase family. Peroxidase/catalase subfamily. As to quaternary structure, homodimer or homotetramer. The cofactor is heme b. Formation of the three residue Trp-Tyr-Met cross-link is important for the catalase, but not the peroxidase activity of the enzyme.

It catalyses the reaction H2O2 + AH2 = A + 2 H2O. It carries out the reaction 2 H2O2 = O2 + 2 H2O. Bifunctional enzyme with both catalase and broad-spectrum peroxidase activity. This Nocardioides sp. (strain ATCC BAA-499 / JS614) protein is Catalase-peroxidase.